An 848-amino-acid chain; its full sequence is MSDTDGKKPLGLGGGRSGHVKQSFSHGRTHNVVVETKRKRVVVPGKTGAAAGGGRSGSPSAVSGDPSKRPAGISDAEMERRMAALRAAKAREVEEAAQRIADEKAREEERERRRLELEAKEREEREREEALRLKAEEDERRAREAELREKKKAEIAKPKTEARPATPADRAAAEAAAVRAETKGVSAAGPRKTDRDRDTRGGGGDDRDSRNKGRDDSRRTGKLSLSQALDGEGGRQRSLAAMKRKQEKARQKAMGGNQRAEKQVRDVQLPETIVVSELANRMAERTPDVIKSLMRMGMMVTANQSIDADTAELVIDEFGHHAVRVSDADVEQVIDQVEDKPEDLQPRAPIITIMGHVDHGKTSLLDAIRHANVVAGEAGGITQHIGAYQVKASNGAVLTFLDTPGHAAFTSMRARGAQVTDIVVLVVAADDAVMPQTVEAINHAKAAKVPMIVAINKIDKPAANPQKVRTDLLLHEVVVEAMSGEVQDVEVSAKTGQGLDTLLEAIALQAEILELKANPDRPAQGAVIEAQLDVGRGPVATVLVQNGTLKRGDIFVVGEQWGKVRALINDKGERVDEAGPSVPVEVLGLNGTPEAGDVLNVVSTEAQAREIADYRIQAAKDKRAAAGAAITLDQMLAKAKADENVAELPVVIKADVQGSAEAIVQALEKIGNDEVRVRVLHYGVGAITESDIGLAEASQAPVIGFNVRANAPARNAANQKGVEIRYYSIIYDLVDDIKAAASGLLSAEVRENFIGYAEIKEVFRVSGVGNVAGCLVTEGVARRSAGVRLLRDNVVIHEGTLKTLKRFKDEVKEVQSGQECGMAFENYDDIRKGDVIEIFEREEVQRQL.

The tract at residues 1 to 265 (MSDTDGKKPL…GNQRAEKQVR (265 aa)) is disordered. A compositionally biased stretch (basic and acidic residues) spans 89 to 162 (KAREVEEAAQ…AEIAKPKTEA (74 aa)). The span at 163–179 (RPATPADRAAAEAAAVR) shows a compositional bias: low complexity. A compositionally biased stretch (basic and acidic residues) spans 191-219 (RKTDRDRDTRGGGGDDRDSRNKGRDDSRR). The tr-type G domain occupies 346–514 (PRAPIITIMG…AIALQAEILE (169 aa)). Residues 355–362 (GHVDHGKT) are G1. 355 to 362 (GHVDHGKT) lines the GTP pocket. The G2 stretch occupies residues 380-384 (GITQH). Residues 402 to 405 (DTPG) are G3. GTP is bound by residues 402 to 406 (DTPGH) and 456 to 459 (NKID). Positions 456 to 459 (NKID) are G4. Residues 492 to 494 (SAK) are G5.

The protein belongs to the TRAFAC class translation factor GTPase superfamily. Classic translation factor GTPase family. IF-2 subfamily.

Its subcellular location is the cytoplasm. Functionally, one of the essential components for the initiation of protein synthesis. Protects formylmethionyl-tRNA from spontaneous hydrolysis and promotes its binding to the 30S ribosomal subunits. Also involved in the hydrolysis of GTP during the formation of the 70S ribosomal complex. The sequence is that of Translation initiation factor IF-2 from Paracoccus denitrificans (strain Pd 1222).